The primary structure comprises 214 residues: 3-isopropylmalate dehydratase small subunit (214 aa).

Belongs to the LeuD family. LeuD type 1 subfamily. In terms of assembly, heterodimer of LeuC and LeuD.

It carries out the reaction (2R,3S)-3-isopropylmalate = (2S)-2-isopropylmalate. Its pathway is amino-acid biosynthesis; L-leucine biosynthesis; L-leucine from 3-methyl-2-oxobutanoate: step 2/4. In terms of biological role, catalyzes the isomerization between 2-isopropylmalate and 3-isopropylmalate, via the formation of 2-isopropylmaleate. In Methylobacillus flagellatus (strain ATCC 51484 / DSM 6875 / VKM B-1610 / KT), this protein is 3-isopropylmalate dehydratase small subunit.